A 298-amino-acid chain; its full sequence is N-acetylmuramic acid 6-phosphate etherase (298 aa).

The region spanning 55 to 218 (IHTQVSGGGR…STGLMIKSGK (164 aa)) is the SIS domain. Glutamate 83 (proton donor) is an active-site residue. Glutamate 114 is a catalytic residue.

Belongs to the GCKR-like family. MurNAc-6-P etherase subfamily. As to quaternary structure, homodimer.

It carries out the reaction N-acetyl-D-muramate 6-phosphate + H2O = N-acetyl-D-glucosamine 6-phosphate + (R)-lactate. It participates in amino-sugar metabolism; 1,6-anhydro-N-acetylmuramate degradation. Its pathway is amino-sugar metabolism; N-acetylmuramate degradation. It functions in the pathway cell wall biogenesis; peptidoglycan recycling. Functionally, specifically catalyzes the cleavage of the D-lactyl ether substituent of MurNAc 6-phosphate, producing GlcNAc 6-phosphate and D-lactate. Together with AnmK, is also required for the utilization of anhydro-N-acetylmuramic acid (anhMurNAc) either imported from the medium or derived from its own cell wall murein, and thus plays a role in cell wall recycling. This is N-acetylmuramic acid 6-phosphate etherase from Escherichia coli O127:H6 (strain E2348/69 / EPEC).